A 364-amino-acid polypeptide reads, in one-letter code: Mannonate dehydratase (364 aa).

Belongs to the mannonate dehydratase family. The cofactor is Fe(2+). It depends on Mn(2+) as a cofactor.

The enzyme catalyses D-mannonate = 2-dehydro-3-deoxy-D-gluconate + H2O. The protein operates within carbohydrate metabolism; pentose and glucuronate interconversion. Its function is as follows. Catalyzes the dehydration of D-mannonate. The polypeptide is Mannonate dehydratase (Endomicrobium trichonymphae).